Consider the following 288-residue polypeptide: Elongation factor Ts (288 aa).

An involved in Mg(2+) ion dislocation from EF-Tu region spans residues 79–82 (TDFV).

This sequence belongs to the EF-Ts family.

It localises to the cytoplasm. Associates with the EF-Tu.GDP complex and induces the exchange of GDP to GTP. It remains bound to the aminoacyl-tRNA.EF-Tu.GTP complex up to the GTP hydrolysis stage on the ribosome. The sequence is that of Elongation factor Ts from Ehrlichia ruminantium (strain Gardel).